Reading from the N-terminus, the 560-residue chain is Serine palmitoyltransferase 2 (560 aa).

Residues 65–85 form a helical membrane-spanning segment; the sequence is PMLVAVLTYVGYGVLTLFGYL. Residue K377 is modified to N6-(pyridoxal phosphate)lysine.

This sequence belongs to the class-II pyridoxal-phosphate-dependent aminotransferase family. In terms of assembly, component of the serine palmitoyltransferase (SPT) complex, which is composed of SPTLC1, SPTLC2 or SPTLC3 and SPTSSA or SPTSSB. The heterodimer consisting of SPTLC1 and SPTLC2/SPTLC3 forms the catalytic core of the enzyme, while SPTSSA or SPTSSB subunits determine substrate specificity. SPT also interacts with ORMDL proteins, especially ORMDL3, which negatively regulate SPT activity in the presence of ceramides. Forms dimers of heterodimers with SPTLC1. Pyridoxal 5'-phosphate is required as a cofactor. As to expression, expressed in astrocytes.

The protein localises to the endoplasmic reticulum membrane. The catalysed reaction is L-serine + hexadecanoyl-CoA + H(+) = 3-oxosphinganine + CO2 + CoA. It carries out the reaction octadecanoyl-CoA + L-serine + H(+) = 3-oxoeicosasphinganine + CO2 + CoA. The protein operates within lipid metabolism; sphingolipid metabolism. SPT complex catalytic activity is negatively regulated by ORMDL proteins, including ORMDL3, in the presence of ceramides. This mechanism allows to maintain ceramide levels at sufficient concentrations for the production of complex sphingolipids, but which prevents the accumulation of ceramides to levels that trigger apoptosis. In terms of biological role, component of the serine palmitoyltransferase multisubunit enzyme (SPT) that catalyzes the initial and rate-limiting step in sphingolipid biosynthesis by condensing L-serine and activated acyl-CoA (most commonly palmitoyl-CoA) to form long-chain bases. The SPT complex is composed of SPTLC1, SPTLC2 or SPTLC3 and SPTSSA or SPTSSB. Within this complex, the heterodimer consisting of SPTLC1 and SPTLC2/SPTLC3 forms the catalytic core. The composition of the serine palmitoyltransferase (SPT) complex determines the substrate preference. The SPTLC1-SPTLC2-SPTSSA complex shows a strong preference for C16-CoA substrate, while the SPTLC1-SPTLC3-SPTSSA isozyme uses both C14-CoA and C16-CoA as substrates, with a slight preference for C14-CoA. The SPTLC1-SPTLC2-SPTSSB complex shows a strong preference for C18-CoA substrate, while the SPTLC1-SPTLC3-SPTSSB isozyme displays an ability to use a broader range of acyl-CoAs, without apparent preference. Crucial for adipogenesis. The polypeptide is Serine palmitoyltransferase 2 (Rattus norvegicus (Rat)).